The chain runs to 519 residues: Cytosol aminopeptidase (519 aa).

Ser-42 carries the phosphoserine modification. An N6-succinyllysine modification is found at Lys-45. Residue Ser-54 is modified to Phosphoserine. 2 positions are modified to N6-succinyllysine: Lys-61 and Lys-103. Ser-180 and Ser-194 each carry phosphoserine. The Zn(2+) site is built by Leu-202, Met-203, and Thr-205. Position 221 is an N6-acetyllysine; alternate (Lys-221). Residue Lys-221 is modified to N6-succinyllysine; alternate. Phosphoserine is present on Ser-238. Zn(2+) is bound by residues Lys-282 and Asp-287. Substrate-binding residues include Lys-282, Asp-287, Ser-292, and Lys-294. Asp-287 lines the Mg(2+) pocket. Residue Lys-294 is part of the active site. Residues Arg-303, Asp-305, Asp-364, and Glu-366 each coordinate Zn(2+). Asp-305 and Asp-364 together coordinate substrate. Residues Asp-364 and Glu-366 each contribute to the Mg(2+) site. Arg-368 is a catalytic residue. Lys-455 bears the N6-acetyllysine; alternate mark. Lys-455 is modified (N6-succinyllysine; alternate). The residue at position 476 (Lys-476) is an N6-succinyllysine. The residue at position 489 (Lys-489) is an N6-acetyllysine; alternate. Lys-489 carries the post-translational modification N6-succinyllysine; alternate.

Belongs to the peptidase M17 family. Homohexamer. Requires Zn(2+) as cofactor. Mn(2+) is required as a cofactor.

Its subcellular location is the cytoplasm. It carries out the reaction Release of an N-terminal amino acid, Xaa-|-Yaa-, in which Xaa is preferably Leu, but may be other amino acids including Pro although not Arg or Lys, and Yaa may be Pro. Amino acid amides and methyl esters are also readily hydrolyzed, but rates on arylamides are exceedingly low.. The catalysed reaction is an S-substituted L-cysteinylglycine + H2O = an S-substituted L-cysteine + glycine. It catalyses the reaction L-cysteinylglycine + H2O = L-cysteine + glycine. The enzyme catalyses S-benzyl-L-cysteinylglycine + H2O = S-benzyl-L-cysteine + glycine. It carries out the reaction Release of N-terminal proline from a peptide.. Its function is as follows. Cytosolic metallopeptidase that catalyzes the removal of unsubstituted N-terminal hydrophobic amino acids from various peptides. The presence of Zn(2+) ions is essential for the peptidase activity, and the association with other cofactors can modulate the substrate spectificity of the enzyme. For instance, in the presence of Mn(2+), it displays a specific Cys-Gly hydrolyzing activity of Cys-Gly-S-conjugates. Involved in the metabolism of glutathione and in the degradation of glutathione S-conjugates, which may play a role in the control of the cell redox status. The chain is Cytosol aminopeptidase from Homo sapiens (Human).